The primary structure comprises 315 residues: Putative S-adenosyl-L-methionine-dependent methyltransferase MAV_4557 (315 aa).

S-adenosyl-L-methionine contacts are provided by residues aspartate 134 and 163–164 (DL).

Belongs to the UPF0677 family.

Exhibits S-adenosyl-L-methionine-dependent methyltransferase activity. In Mycobacterium avium (strain 104), this protein is Putative S-adenosyl-L-methionine-dependent methyltransferase MAV_4557.